Here is a 413-residue protein sequence, read N- to C-terminus: Serine hydroxymethyltransferase (413 aa).

Residues L119 and G123–L125 each bind (6S)-5,6,7,8-tetrahydrofolate. At K228 the chain carries N6-(pyridoxal phosphate)lysine. S351–F353 contacts (6S)-5,6,7,8-tetrahydrofolate.

Belongs to the SHMT family. In terms of assembly, homodimer. Requires pyridoxal 5'-phosphate as cofactor.

It is found in the cytoplasm. It catalyses the reaction (6R)-5,10-methylene-5,6,7,8-tetrahydrofolate + glycine + H2O = (6S)-5,6,7,8-tetrahydrofolate + L-serine. It functions in the pathway one-carbon metabolism; tetrahydrofolate interconversion. Its pathway is amino-acid biosynthesis; glycine biosynthesis; glycine from L-serine: step 1/1. Catalyzes the reversible interconversion of serine and glycine with tetrahydrofolate (THF) serving as the one-carbon carrier. This reaction serves as the major source of one-carbon groups required for the biosynthesis of purines, thymidylate, methionine, and other important biomolecules. Also exhibits THF-independent aldolase activity toward beta-hydroxyamino acids, producing glycine and aldehydes, via a retro-aldol mechanism. This chain is Serine hydroxymethyltransferase, found in Anoxybacillus flavithermus (strain DSM 21510 / WK1).